A 196-amino-acid chain; its full sequence is Probable histone chaperone ASF1A (196 aa).

A compositionally biased stretch (basic and acidic residues) spans 146 to 157 (VTKFPIDFHPEE). The disordered stretch occupies residues 146–196 (VTKFPIDFHPEEEQTAATAAPPEQSDEQQPNVNGEAQVLPDQSVEPKPEES).

Belongs to the ASF1 family. In terms of assembly, interacts with histone H3 and histone H4. Component of the HIRA complex made of UBN1, UBN2, ASF1A, CABIN1 and HIRA. Interacts with HIRA. Expressed in leaves and flower buds.

Its subcellular location is the nucleus. The protein localises to the nucleolus. Its function is as follows. Histone chaperone that facilitates histone deposition and histone exchange and removal during nucleosome assembly and disassembly. While encoded by a region of the Arabidopsis thaliana genome that is homologous to the Brassica S-locus for self incompatibility, this protein may not play the same role in Arabidopsis thaliana. The chain is Probable histone chaperone ASF1A (ASF1A) from Arabidopsis thaliana (Mouse-ear cress).